A 167-amino-acid polypeptide reads, in one-letter code: Ureidoglycolate lyase (167 aa).

Belongs to the ureidoglycolate lyase family. As to quaternary structure, homodimer. Ni(2+) is required as a cofactor.

It catalyses the reaction (S)-ureidoglycolate = urea + glyoxylate. The protein operates within nitrogen metabolism; (S)-allantoin degradation. Catalyzes the catabolism of the allantoin degradation intermediate (S)-ureidoglycolate, generating urea and glyoxylate. Involved in the utilization of allantoin as nitrogen source. The polypeptide is Ureidoglycolate lyase (Pseudomonas fluorescens (strain SBW25)).